The sequence spans 34 residues: Trypsin inhibitor 2 (34 aa).

The cyclopeptide (Ser-Gly) cross-link spans 1–34; the sequence is SGSDGGVCPKILKKCRRDSDCPGACICRGNGYCG. A cross-link ((2-aminosuccinimidyl)acetic acid (Asp-Gly); alternate) is located at residues 4–5; sequence DG. Positions 4-5 form a cross-link, isoaspartyl glycine isopeptide (Asp-Gly); alternate; the sequence is DG. 3 disulfide bridges follow: cysteine 8–cysteine 25, cysteine 15–cysteine 27, and cysteine 21–cysteine 33.

In terms of processing, a cyclic succinimide probably forms by loss of water between Asp-4 and Gly-5, that can then rehydrate to either the original peptide bond or to a beta-aspartyl isopeptide bond. Three isoforms of MCoTI-II are detected, two with the parent molecular weight, corresponding to the unmodified and proposed isopeptide forms, and one with a molecular weight 18 Da lower, corresponding to a succinimide cross-linked form. Post-translationally, this is a cyclic peptide.

Its subcellular location is the secreted. Inhibits trypsin; probably participates in a plant defense mechanism. The sequence is that of Trypsin inhibitor 2 from Momordica cochinchinensis (Spiny bitter cucumber).